We begin with the raw amino-acid sequence, 354 residues long: Guanine nucleotide-binding protein G(i) subunit alpha-3 (354 aa).

Glycine 2 is lipidated: N-myristoyl glycine. The S-palmitoyl cysteine moiety is linked to residue cysteine 3. One can recognise a G-alpha domain in the interval 32–354; the sequence is KEVKLLLLGA…KNNLKECGLY (323 aa). Residues 35-48 are G1 motif; sequence KLLLLGAGESGKST. Glycine 42, glutamate 43, serine 44, glycine 45, lysine 46, serine 47, threonine 48, aspartate 150, serine 151, leucine 175, arginine 176, threonine 177, arginine 178, valine 179, lysine 180, threonine 181, valine 201, glycine 203, asparagine 269, lysine 270, aspartate 272, leucine 273, cysteine 325, alanine 326, and threonine 327 together coordinate GTP. A Mg(2+)-binding site is contributed by serine 47. The segment at 173-181 is G2 motif; that stretch reads DVLRTRVKT. Residue threonine 181 coordinates Mg(2+). The segment at 196-205 is G3 motif; that stretch reads FKMFDVGGQR. Positions 265–272 are G4 motif; that stretch reads ILFLNKKD. The G5 motif stretch occupies residues 324–329; it reads TCATDT.

Belongs to the G-alpha family. G(i/o/t/z) subfamily. Heterotrimeric G proteins are composed of 3 units; alpha, beta and gamma. The alpha subunit contains the guanine nucleotide binding site. GTP binding causes dissociation of the heterotrimer, liberating the individual subunits so that they can interact with downstream effector proteins. Forms a complex with CCDC88A/GIV and EGFR which leads to enhanced EGFR signaling and triggering of cell migration; ligand stimulation is required for recruitment of GNAI3 to the complex. Interacts (inactive GDP-bound form) with CCDC88A/GIV (via GBA motif); the interaction leads to activation of GNAI3. Interacts (inactive GDP-bound form) with CCDC88C/DAPLE (via GBA motif); the interaction leads to activation of GNAI3. Interacts (inactive GDP-bound form) with NUCB1 (via GBA motif) and NUCB2 (via GBA motif); the interaction leads to activation of GNAI3. Interacts (inactive GDP-bound form) with PLCD4 (via GBA motif); the interaction leads to activation of GNAI3. Interacts with INSR; the interaction is probably mediated by CCDC88A/GIV. Interacts with GPSM1. Interacts (GDP-bound form) with GPSM2 (via GoLoco domains). Does not interact with RGS2. Interacts with RGS8 and RGS10; this strongly enhances the intrinsic GTPase activity. Interacts with RGS16; this strongly enhances the intrinsic GTPase activity. Interacts with RGS12. Interacts (via active GTP- or inactive GDP-bound form) with RGS14. Interacts (via active GTP-bound form) with TRPC5 (via ANK repeats) in a homotetrameric ion channel; the interaction is direct and activates the channel activity. In terms of tissue distribution, ubiquitously expressed.

It is found in the cytoplasm. The protein localises to the cell membrane. It localises to the cytoskeleton. The protein resides in the microtubule organizing center. Its subcellular location is the centrosome. Its function is as follows. Heterotrimeric guanine nucleotide-binding proteins (G proteins) function as transducers downstream of G protein-coupled receptors (GPCRs) in numerous signaling cascades. The alpha chain contains the guanine nucleotide binding site and alternates between an active, GTP-bound state and an inactive, GDP-bound state. Signaling by an activated GPCR promotes GDP release and GTP binding. The alpha subunit has a low GTPase activity that converts bound GTP to GDP, thereby terminating the signal. Both GDP release and GTP hydrolysis are modulated by numerous regulatory proteins. Signaling is mediated via effector proteins, such as adenylate cyclase. Inhibits adenylate cyclase activity, leading to decreased intracellular cAMP levels. Stimulates the activity of receptor-regulated K(+) channels. The active GTP-bound form prevents the association of RGS14 with centrosomes and is required for the translocation of RGS14 from the cytoplasm to the plasma membrane. May play a role in cell division. The active GTP-bound form activates the calcium permeant TRPC5 ion channels. The protein is Guanine nucleotide-binding protein G(i) subunit alpha-3 (GNAI3) of Cavia porcellus (Guinea pig).